The chain runs to 474 residues: Aspartyl/glutamyl-tRNA(Asn/Gln) amidotransferase subunit B (474 aa).

Belongs to the GatB/GatE family. GatB subfamily. Heterotrimer of A, B and C subunits.

The catalysed reaction is L-glutamyl-tRNA(Gln) + L-glutamine + ATP + H2O = L-glutaminyl-tRNA(Gln) + L-glutamate + ADP + phosphate + H(+). It catalyses the reaction L-aspartyl-tRNA(Asn) + L-glutamine + ATP + H2O = L-asparaginyl-tRNA(Asn) + L-glutamate + ADP + phosphate + 2 H(+). Functionally, allows the formation of correctly charged Asn-tRNA(Asn) or Gln-tRNA(Gln) through the transamidation of misacylated Asp-tRNA(Asn) or Glu-tRNA(Gln) in organisms which lack either or both of asparaginyl-tRNA or glutaminyl-tRNA synthetases. The reaction takes place in the presence of glutamine and ATP through an activated phospho-Asp-tRNA(Asn) or phospho-Glu-tRNA(Gln). This is Aspartyl/glutamyl-tRNA(Asn/Gln) amidotransferase subunit B from Lactiplantibacillus plantarum (strain ATCC BAA-793 / NCIMB 8826 / WCFS1) (Lactobacillus plantarum).